The primary structure comprises 481 residues: Eukaryotic translation initiation factor 3 subunit L (481 aa).

Residues 1–22 form a disordered region; that stretch reads MSVDARTAYPGSRPPANMQDES. A PCI domain is found at 262-457; the sequence is DAIRTFSHIL…DLDYAIEGNL (196 aa).

Belongs to the eIF-3 subunit L family. As to quaternary structure, component of the eukaryotic translation initiation factor 3 (eIF-3) complex.

The protein localises to the cytoplasm. Its function is as follows. Component of the eukaryotic translation initiation factor 3 (eIF-3) complex, which is involved in protein synthesis of a specialized repertoire of mRNAs and, together with other initiation factors, stimulates binding of mRNA and methionyl-tRNAi to the 40S ribosome. The eIF-3 complex specifically targets and initiates translation of a subset of mRNAs involved in cell proliferation. In Coccidioides immitis (strain RS) (Valley fever fungus), this protein is Eukaryotic translation initiation factor 3 subunit L.